The sequence spans 725 residues: Catalase-peroxidase 1 (725 aa).

The segment at residues 96 to 224 (WHSAGSYRLA…LAAVQMGLIY (129 aa)) is a cross-link (tryptophyl-tyrosyl-methioninium (Trp-Tyr) (with M-250)). The Proton acceptor role is filled by H97. A cross-link (tryptophyl-tyrosyl-methioninium (Tyr-Met) (with W-96)) is located at residues 224–250 (YVNPEGVDGNPDPLRTAKDVRETFKRM). H265 serves as a coordination point for heme b.

It belongs to the peroxidase family. Peroxidase/catalase subfamily. Homodimer or homotetramer. Heme b serves as cofactor. Post-translationally, formation of the three residue Trp-Tyr-Met cross-link is important for the catalase, but not the peroxidase activity of the enzyme.

It catalyses the reaction H2O2 + AH2 = A + 2 H2O. The catalysed reaction is 2 H2O2 = O2 + 2 H2O. In terms of biological role, bifunctional enzyme with both catalase and broad-spectrum peroxidase activity. The polypeptide is Catalase-peroxidase 1 (Idiomarina loihiensis (strain ATCC BAA-735 / DSM 15497 / L2-TR)).